The sequence spans 99 residues: Acylphosphatase (99 aa).

An Acylphosphatase-like domain is found at 14–99 (AVDVTVTGRV…DQGLRSFGVR (86 aa)). Residues arginine 29 and asparagine 47 contribute to the active site.

It belongs to the acylphosphatase family.

The enzyme catalyses an acyl phosphate + H2O = a carboxylate + phosphate + H(+). This chain is Acylphosphatase (acyP), found in Nocardioides sp. (strain ATCC BAA-499 / JS614).